The chain runs to 918 residues: Isoleucine--tRNA ligase (918 aa).

Positions 57 to 67 (PYANGHIHIGT) match the 'HIGH' region motif. Residue glutamate 552 participates in L-isoleucyl-5'-AMP binding. Positions 593–597 (KMSKS) match the 'KMSKS' region motif. Lysine 596 serves as a coordination point for ATP. The Zn(2+) site is built by cysteine 886, cysteine 889, cysteine 906, and cysteine 909.

The protein belongs to the class-I aminoacyl-tRNA synthetase family. IleS type 1 subfamily. As to quaternary structure, monomer. Zn(2+) is required as a cofactor.

The protein localises to the cytoplasm. The enzyme catalyses tRNA(Ile) + L-isoleucine + ATP = L-isoleucyl-tRNA(Ile) + AMP + diphosphate. In terms of biological role, catalyzes the attachment of isoleucine to tRNA(Ile). As IleRS can inadvertently accommodate and process structurally similar amino acids such as valine, to avoid such errors it has two additional distinct tRNA(Ile)-dependent editing activities. One activity is designated as 'pretransfer' editing and involves the hydrolysis of activated Val-AMP. The other activity is designated 'posttransfer' editing and involves deacylation of mischarged Val-tRNA(Ile). This is Isoleucine--tRNA ligase from Thermotoga neapolitana (strain ATCC 49049 / DSM 4359 / NBRC 107923 / NS-E).